The following is a 387-amino-acid chain: Protochlorophyllide reductase A, chloroplastic (387 aa).

Residues 1-35 (MALQVQAALLPSALSVPKKGNLSAVVKEPGFLSVS) constitute a chloroplast transit peptide.

It belongs to the short-chain dehydrogenases/reductases (SDR) family. POR subfamily.

It is found in the plastid. The protein localises to the chloroplast. The catalysed reaction is chlorophyllide a + NADP(+) = protochlorophyllide a + NADPH + H(+). It participates in porphyrin-containing compound metabolism; chlorophyll biosynthesis. Functionally, phototransformation of protochlorophyllide (Pchlide) to chlorophyllide (Chlide). The polypeptide is Protochlorophyllide reductase A, chloroplastic (PORA) (Oryza sativa subsp. japonica (Rice)).